The sequence spans 889 residues: DNA gyrase subunit A (889 aa).

Residues 35 to 501 form the Topo IIA-type catalytic domain; sequence LPDVRDGLKP…GFEDLEDEDL (467 aa). Catalysis depends on Y123, which acts as the O-(5'-phospho-DNA)-tyrosine intermediate. A GyrA-box motif is present at residues 528 to 534; it reads QNRGGRG. Residues 810–889 form a disordered region; it reads VKEDAEDETN…IQQSSDEDEE (80 aa). Residues 813–823 are compositionally biased toward acidic residues; the sequence is DAEDETNEDEQ. Positions 863-875 are enriched in basic and acidic residues; it reads DGRIEVRQDFMDR. The segment covering 876–889 has biased composition (acidic residues); sequence VEEDIQQSSDEDEE.

Belongs to the type II topoisomerase GyrA/ParC subunit family. Heterotetramer, composed of two GyrA and two GyrB chains. In the heterotetramer, GyrA contains the active site tyrosine that forms a transient covalent intermediate with DNA, while GyrB binds cofactors and catalyzes ATP hydrolysis.

Its subcellular location is the cytoplasm. It carries out the reaction ATP-dependent breakage, passage and rejoining of double-stranded DNA.. Functionally, a type II topoisomerase that negatively supercoils closed circular double-stranded (ds) DNA in an ATP-dependent manner to modulate DNA topology and maintain chromosomes in an underwound state. Negative supercoiling favors strand separation, and DNA replication, transcription, recombination and repair, all of which involve strand separation. Also able to catalyze the interconversion of other topological isomers of dsDNA rings, including catenanes and knotted rings. Type II topoisomerases break and join 2 DNA strands simultaneously in an ATP-dependent manner. The sequence is that of DNA gyrase subunit A from Staphylococcus aureus (strain N315).